The primary structure comprises 260 residues: Phosphatidylglycerol--prolipoprotein diacylglyceryl transferase (260 aa).

The next 4 membrane-spanning stretches (helical) occupy residues 17–37 (VVKW…SWIF), 52–72 (LTAA…LHVI), 85–105 (IFSG…IGLW), and 113–133 (FNLG…QAIG). R134 contributes to the a 1,2-diacyl-sn-glycero-3-phospho-(1'-sn-glycerol) binding site. A run of 3 helical transmembrane segments spans residues 170-190 (APTQ…SLFI), 198-218 (GQLF…IGFV), and 227-247 (GLEQ…PLFI).

It belongs to the Lgt family.

It is found in the cell membrane. It catalyses the reaction L-cysteinyl-[prolipoprotein] + a 1,2-diacyl-sn-glycero-3-phospho-(1'-sn-glycerol) = an S-1,2-diacyl-sn-glyceryl-L-cysteinyl-[prolipoprotein] + sn-glycerol 1-phosphate + H(+). It participates in protein modification; lipoprotein biosynthesis (diacylglyceryl transfer). Its function is as follows. Catalyzes the transfer of the diacylglyceryl group from phosphatidylglycerol to the sulfhydryl group of the N-terminal cysteine of a prolipoprotein, the first step in the formation of mature lipoproteins. In Dehalococcoides mccartyi (strain ATCC BAA-2100 / JCM 16839 / KCTC 5957 / BAV1), this protein is Phosphatidylglycerol--prolipoprotein diacylglyceryl transferase.